A 381-amino-acid polypeptide reads, in one-letter code: Chaperone protein DnaJ (381 aa).

Residues 5-70 form the J domain; the sequence is DFYEVLGVSR…QKKAAYDQYG (66 aa). The segment at 136–214 adopts a CR-type zinc-finger fold; it reads GVSKEIEVPT…CHGQGRKQKT (79 aa). 8 residues coordinate Zn(2+): C149, C152, C166, C169, C188, C191, C202, and C205. CXXCXGXG motif repeat units lie at residues 149–156, 166–173, 188–195, and 202–209; these read CDICDGSG, CGTCHGHG, CPTCNGKG, and CNSCHGQG.

It belongs to the DnaJ family. As to quaternary structure, homodimer. Zn(2+) serves as cofactor.

The protein resides in the cytoplasm. In terms of biological role, participates actively in the response to hyperosmotic and heat shock by preventing the aggregation of stress-denatured proteins and by disaggregating proteins, also in an autonomous, DnaK-independent fashion. Unfolded proteins bind initially to DnaJ; upon interaction with the DnaJ-bound protein, DnaK hydrolyzes its bound ATP, resulting in the formation of a stable complex. GrpE releases ADP from DnaK; ATP binding to DnaK triggers the release of the substrate protein, thus completing the reaction cycle. Several rounds of ATP-dependent interactions between DnaJ, DnaK and GrpE are required for fully efficient folding. Also involved, together with DnaK and GrpE, in the DNA replication of plasmids through activation of initiation proteins. This chain is Chaperone protein DnaJ, found in Vibrio atlanticus (strain LGP32) (Vibrio splendidus (strain Mel32)).